A 390-amino-acid polypeptide reads, in one-letter code: MRYLTAGESHGPQLTTIIEGVPAGLYIEQDDINYELARRQKGHGRGRRMQIEKDQAKVLSGVRHGKTLGSPIALVVENNDWKHWTKVMGAEPITEEEESEMKRQISRPRPGHADLNGAIKYGHRDMRNVLERSSARETTVRVAAGAVAKQILAHLGIKVAGHVLEIGGVKAAHTAYESIEDLQKVTEESPVRCYDSEAGQKMMDAIDEAKKNGDSIGGIVEVIVEGMPVGVGSYVHYDRKLDSKLAGAVLSINAFKGVEFGIGFEAASKNGSEVHDEIIWDEEKGYTRKTNRLGGLEGGMSTGMPIVVRGVMKPIPTLYKPLQSVDIETKEPFSASIERSDSCAVPAASVVAEAVVAWEIANAVVEQFGLDQIDRIKENVEKMRQLQREF.

Residues Arg-39 and Arg-45 each contribute to the NADP(+) site. Residues 132–134 (RSS), 253–254 (NA), Gly-298, 313–317 (KPIPT), and Arg-339 contribute to the FMN site.

The protein belongs to the chorismate synthase family. Homotetramer. FMNH2 serves as cofactor.

The catalysed reaction is 5-O-(1-carboxyvinyl)-3-phosphoshikimate = chorismate + phosphate. The protein operates within metabolic intermediate biosynthesis; chorismate biosynthesis; chorismate from D-erythrose 4-phosphate and phosphoenolpyruvate: step 7/7. Functionally, catalyzes the anti-1,4-elimination of the C-3 phosphate and the C-6 proR hydrogen from 5-enolpyruvylshikimate-3-phosphate (EPSP) to yield chorismate, which is the branch point compound that serves as the starting substrate for the three terminal pathways of aromatic amino acid biosynthesis. This reaction introduces a second double bond into the aromatic ring system. This Bacillus pumilus (strain SAFR-032) protein is Chorismate synthase.